Here is a 275-residue protein sequence, read N- to C-terminus: NH(3)-dependent NAD(+) synthetase (275 aa).

Residue 46–53 participates in ATP binding; it reads GISGGQDS. Asp52 provides a ligand contact to Mg(2+). Arg141 provides a ligand contact to deamido-NAD(+). Thr161 lines the ATP pocket. Glu166 is a Mg(2+) binding site. The deamido-NAD(+) site is built by Lys174 and Asp181. ATP is bound by residues Lys190 and Thr212. Residue 261–262 coordinates deamido-NAD(+); that stretch reads HK.

Belongs to the NAD synthetase family. As to quaternary structure, homodimer.

It catalyses the reaction deamido-NAD(+) + NH4(+) + ATP = AMP + diphosphate + NAD(+) + H(+). The protein operates within cofactor biosynthesis; NAD(+) biosynthesis; NAD(+) from deamido-NAD(+) (ammonia route): step 1/1. In terms of biological role, catalyzes the ATP-dependent amidation of deamido-NAD to form NAD. Uses ammonia as a nitrogen source. The protein is NH(3)-dependent NAD(+) synthetase of Limosilactobacillus reuteri (strain DSM 20016) (Lactobacillus reuteri).